The primary structure comprises 347 residues: NADH-ubiquinone oxidoreductase chain 2 (347 aa).

11 helical membrane passes run 1–21, 25–45, 59–79, 96–116, 122–142, 145–165, 178–198, 200–220, 242–262, 274–294, and 325–345; these read MNPL…SIIL, HWFM…PVLM, YFLT…INLM, LLIT…FWVP, VSLQ…LAVM, IFAS…IMIG, IMAY…IYNP, LMLL…MMFM, VLMM…GFMP, NSVI…FFYM, and LLAP…MFIL.

It belongs to the complex I subunit 2 family. In terms of assembly, core subunit of respiratory chain NADH dehydrogenase (Complex I) which is composed of 45 different subunits. Interacts with TMEM242.

It is found in the mitochondrion inner membrane. It catalyses the reaction a ubiquinone + NADH + 5 H(+)(in) = a ubiquinol + NAD(+) + 4 H(+)(out). Core subunit of the mitochondrial membrane respiratory chain NADH dehydrogenase (Complex I) which catalyzes electron transfer from NADH through the respiratory chain, using ubiquinone as an electron acceptor. Essential for the catalytic activity and assembly of complex I. The polypeptide is NADH-ubiquinone oxidoreductase chain 2 (Myosorex kihaulei (Kihaule's mouse shrew)).